A 428-amino-acid polypeptide reads, in one-letter code: Histone deacetylase 3 (428 aa).

The tract at residues 3–316 (KTVAYFYDPD…WTYETSLLVE (314 aa)) is histone deacetylase. His17, Gly21, and Lys25 together coordinate 1D-myo-inositol 1,4,5,6-tetrakisphosphate. Residue His135 is part of the active site. Asp170, His172, and Asp259 together coordinate Zn(2+). Arg265 provides a ligand contact to 1D-myo-inositol 1,4,5,6-tetrakisphosphate. 2 stretches are compositionally biased toward basic and acidic residues: residues 388–405 (DRTDEADAEERGPEENYS) and 415–428 (DGDHDNDKESDVEI). A disordered region spans residues 388-428 (DRTDEADAEERGPEENYSRPEAPNEFYDGDHDNDKESDVEI). Ser424 is subject to Phosphoserine.

The protein belongs to the histone deacetylase family. HD type 1 subfamily. Interacts with HDAC7 and HDAC9. Interacts with DAXX, KDM4A, HDAC10 and DACH1. Found in a complex with NCOR1 and NCOR2. Component of the N-Cor repressor complex, at least composed of NCOR1, NCOR2, HDAC3, TBL1X, TBL1R, CORO2A and GPS2. Interacts with BCOR, MJD2A/JHDM3A, NRIP1, PRDM6 and SRY. Interacts with BTBD14B. Interacts with GLIS2. Interacts (via the DNA-binding domain) with NR2C1; the interaction recruits phosphorylated NR2C1 to PML bodies for sumoylation. Component of the Notch corepressor complex. Interacts with CBFA2T3 and NKAP. Interacts with APEX1; the interaction is not dependent on the acetylated status of APEX1. Interacts with ZMYND15. Interacts with SMRT/NCOR2 and BCL6 on DNA enhancer elements. Interacts with INSM1. Interacts with XBP1 isoform 1; the interaction occurs in endothelial cell (EC) under disturbed flow. Interacts (via C-terminus) with CCAR2 (via N-terminus). Interacts with and deacetylates MEF2D. Interacts with BEND3. Interacts with NKAPL. Interacts with DHX36; this interaction occurs in a RNA-dependent manner. Interacts weakly with CRY1; this interaction is enhanced in the presence of FBXL3. Interacts with FBXL3 and BMAL1. Interacts with NCOR1. Interacts with RARA. Interacts with SETD5. In terms of assembly, (Microbial infection) Interacts with human cytomegalovirus (HHV-5) immediate early protein IE1; this interaction decreases histone acetylation and allows transcriptional activation by the virus. The cofactor is Zn(2+). Sumoylated in vitro. Post-translationally, deubiquitinated on 'Lys-63'-linked ubiquitin chains by USP38; leading to a decreased level of histone acetylation. Widely expressed.

It is found in the nucleus. Its subcellular location is the chromosome. The protein localises to the cytoplasm. It localises to the cytosol. The enzyme catalyses N(6)-acetyl-L-lysyl-[histone] + H2O = L-lysyl-[histone] + acetate. It catalyses the reaction N(6)-acetyl-L-lysyl-[protein] + H2O = L-lysyl-[protein] + acetate. It carries out the reaction N(6)-(2E)-butenoyl-L-lysyl-[protein] + H2O = (2E)-2-butenoate + L-lysyl-[protein]. The catalysed reaction is N(6)-(2-hydroxyisobutanoyl)-L-lysyl-[protein] + H2O = 2-hydroxy-2-methylpropanoate + L-lysyl-[protein]. The enzyme catalyses N(6)-[(S)-lactoyl]-L-lysyl-[protein] + H2O = (S)-lactate + L-lysyl-[protein]. Inositol tetraphosphate (1D-myo-inositol 1,4,5,6-tetrakisphosphate) promotes the histone deacetylase activity by acting as an intermolecular glue between HDAC3 and NCOR2, thereby promoting its association with the N-Cor complex, a prerequisite for the histone deacetylase activity. Histone deacetylase that catalyzes the deacetylation of lysine residues on the N-terminal part of the core histones (H2A, H2B, H3 and H4), and some other non-histone substrates. Histone deacetylation gives a tag for epigenetic repression and plays an important role in transcriptional regulation, cell cycle progression and developmental events. Histone deacetylases act via the formation of large multiprotein complexes, such as N-Cor repressor complex, which activate the histone deacetylase activity. Participates in the BCL6 transcriptional repressor activity by deacetylating the H3 'Lys-27' (H3K27) on enhancer elements, antagonizing EP300 acetyltransferase activity and repressing proximal gene expression. Acts as a molecular chaperone for shuttling phosphorylated NR2C1 to PML bodies for sumoylation. Contributes, together with XBP1 isoform 1, to the activation of NFE2L2-mediated HMOX1 transcription factor gene expression in a PI(3)K/mTORC2/Akt-dependent signaling pathway leading to endothelial cell (EC) survival under disturbed flow/oxidative stress. Regulates both the transcriptional activation and repression phases of the circadian clock in a deacetylase activity-independent manner. During the activation phase, promotes the accumulation of ubiquitinated BMAL1 at the E-boxes and during the repression phase, blocks FBXL3-mediated CRY1/2 ubiquitination and promotes the interaction of CRY1 and BMAL1. The NCOR1-HDAC3 complex regulates the circadian expression of the core clock gene BMAL1 and the genes involved in lipid metabolism in the liver. Also functions as a deacetylase for non-histone targets, such as KAT5, MEF2D, MAPK14, RARA and STAT3. Serves as a corepressor of RARA, mediating its deacetylation and repression, leading to inhibition of RARE DNA element binding. In association with RARA, plays a role in the repression of microRNA-10a and thereby in the inflammatory response. In addition to protein deacetylase activity, also acts as a protein-lysine deacylase by recognizing other acyl groups: catalyzes removal of (2E)-butenoyl (crotonyl), lactoyl (lactyl) and 2-hydroxyisobutanoyl (2-hydroxyisobutyryl) acyl groups from lysine residues, leading to protein decrotonylation, delactylation and de-2-hydroxyisobutyrylation, respectively. Catalyzes decrotonylation of MAPRE1/EB1. Mediates delactylation NBN/NBS1, thereby inhibiting DNA double-strand breaks (DSBs) via homologous recombination (HR). The protein is Histone deacetylase 3 (HDAC3) of Homo sapiens (Human).